The sequence spans 119 residues: Immunoglobulin heavy variable 2-5 (119 aa).

The signal sequence occupies residues 1–19 (MDTLCSTLLLLTIPSWVLS). Gln-20 carries the post-translational modification Pyrrolidone carboxylic acid. The tract at residues 20 to 44 (QITLKESGPTLVKPTQTLTLTCTFS) is framework-1. An Ig-like domain is found at 20 to 119 (QITLKESGPT…DTATYYCAHR (100 aa)). A disulfide bridge links Cys-41 with Cys-116. The segment at 45–54 (GFSLSTSGVG) is complementarity-determining-1. A framework-2 region spans residues 55 to 71 (VGWIRQPPGKALEWLAL). A complementarity-determining-2 region spans residues 72-78 (IYWDDDK). The interval 79–116 (RYSPSLKSRLTITKDTSKNQVVLTMTNMDPVDTATYYC) is framework-3. The complementarity-determining-3 stretch occupies residues 117 to 119 (AHR).

In terms of assembly, immunoglobulins are composed of two identical heavy chains and two identical light chains; disulfide-linked.

It localises to the secreted. It is found in the cell membrane. Functionally, v region of the variable domain of immunoglobulin heavy chains that participates in the antigen recognition. Immunoglobulins, also known as antibodies, are membrane-bound or secreted glycoproteins produced by B lymphocytes. In the recognition phase of humoral immunity, the membrane-bound immunoglobulins serve as receptors which, upon binding of a specific antigen, trigger the clonal expansion and differentiation of B lymphocytes into immunoglobulins-secreting plasma cells. Secreted immunoglobulins mediate the effector phase of humoral immunity, which results in the elimination of bound antigens. The antigen binding site is formed by the variable domain of one heavy chain, together with that of its associated light chain. Thus, each immunoglobulin has two antigen binding sites with remarkable affinity for a particular antigen. The variable domains are assembled by a process called V-(D)-J rearrangement and can then be subjected to somatic hypermutations which, after exposure to antigen and selection, allow affinity maturation for a particular antigen. This Homo sapiens (Human) protein is Immunoglobulin heavy variable 2-5.